The chain runs to 861 residues: DNA mismatch repair protein MutS (861 aa).

613–620 (GPNMGGKS) contributes to the ATP binding site.

The protein belongs to the DNA mismatch repair MutS family.

This protein is involved in the repair of mismatches in DNA. It is possible that it carries out the mismatch recognition step. This protein has a weak ATPase activity. The sequence is that of DNA mismatch repair protein MutS from Dichelobacter nodosus (strain VCS1703A).